The primary structure comprises 1081 residues: Teashirt homolog 3 (1081 aa).

Disordered regions lie at residues 141–161 (PSSEKNNGSSSSSSSSSSSCG) and 238–257 (HYRDDNHETDNNNPKRWSKP). Low complexity predominate over residues 148-161 (GSSSSSSSSSSSCG). 2 C2H2-type zinc fingers span residues 214 to 238 (FRCKDCSAAYDTLVELTVHMNETGH) and 275 to 299 (LKCMYCGHSFESLQDLSVHMIKTKH). Basic and acidic residues predominate over residues 238 to 247 (HYRDDNHETD). A disordered region spans residues 325-364 (SLELELPSSPDSTGGTPKATISDTNDALQKNSNPYITPNN). The span at 335-364 (DSTGGTPKATISDTNDALQKNSNPYITPNN) shows a compositional bias: polar residues. Residues 386–404 (LKCMECGSSHDTLQELTAH) form a C2H2-type 3; atypical zinc finger. Residues 473–491 (EVDKEKAVTDEKPKQKDKP) show a composition bias toward basic and acidic residues. Disordered stretches follow at residues 473–502 (EVDKEKAVTDEKPKQKDKPGEEEEKCDISS), 579–604 (NSEIVSPTKNQTLVSPPSSQTSPMPK), 626–687 (EKMK…LAEP), and 855–897 (TESH…RQSN). A compositionally biased stretch (polar residues) spans 581–603 (EIVSPTKNQTLVSPPSSQTSPMP). Positions 606-630 (NFHAMEELVKKVTEKVAKVEEKMKE) form a coiled coil. Ser-682 is modified (phosphoserine). The span at 856-869 (ESHTSKSSTPSSIS) shows a compositional bias: low complexity. A DNA-binding region (homeobox; atypical) is located at residues 891–961 (RKGRQSNWNP…NVKYQLRRTG (71 aa)). 2 C2H2-type zinc fingers span residues 976 to 998 (FFCNDCASQIRTPSTYISHLESH) and 1041 to 1064 (YQCKLCNRTFASKHAVKLHLSKTH).

The protein belongs to the teashirt C2H2-type zinc-finger protein family. In terms of assembly, interacts (via homeobox domain) with APBB1 (via PID domain 1). Interacts (via N-terminus) with HDAC1 and HDAC2; the interaction is direct. Found in a trimeric complex with APBB1 and HDAC1; the interaction between HDAC1 and APBB1 is mediated by TSHZ3. Expressed in brain; strongly reduced in post-mortem elderly subjects with Alzheimer disease. Expressed in the fetal neocortex.

The protein localises to the nucleus. Its subcellular location is the cell projection. It is found in the growth cone. Functionally, transcriptional regulator involved in developmental processes. Functions in association with APBB1, SET and HDAC factors as a transcriptional repressor, that inhibits the expression of CASP4. TSHZ3-mediated transcription repression involves the recruitment of histone deacetylases HDAC1 and HDAC2. Associates with chromatin in a region surrounding the CASP4 transcriptional start site(s). Regulates the development of neurons involved in both respiratory rhythm and airflow control. Promotes maintenance of nucleus ambiguus (nA) motoneurons, which govern upper airway function, and establishes a respiratory rhythm generator (RRG) activity compatible with survival at birth. Involved in the differentiation of the proximal uretic smooth muscle cells during developmental processes. Involved in the up-regulation of myocardin, that directs the expression of smooth muscle cells in the proximal ureter. Involved in the modulation of glutamatergic synaptic transmission and long-term synaptic potentiation. The protein is Teashirt homolog 3 (TSHZ3) of Homo sapiens (Human).